We begin with the raw amino-acid sequence, 415 residues long: Gamma-glutamyl phosphate reductase (415 aa).

This sequence belongs to the gamma-glutamyl phosphate reductase family.

It is found in the cytoplasm. The catalysed reaction is L-glutamate 5-semialdehyde + phosphate + NADP(+) = L-glutamyl 5-phosphate + NADPH + H(+). Its pathway is amino-acid biosynthesis; L-proline biosynthesis; L-glutamate 5-semialdehyde from L-glutamate: step 2/2. Functionally, catalyzes the NADPH-dependent reduction of L-glutamate 5-phosphate into L-glutamate 5-semialdehyde and phosphate. The product spontaneously undergoes cyclization to form 1-pyrroline-5-carboxylate. This Shouchella clausii (strain KSM-K16) (Alkalihalobacillus clausii) protein is Gamma-glutamyl phosphate reductase.